The sequence spans 432 residues: Glutamine synthetase, chloroplastic (432 aa).

The GS beta-grasp domain occupies Ile-79–Gly-159. Residues Lys-166–Val-432 enclose the GS catalytic domain.

Belongs to the glutamine synthetase family. In terms of assembly, homooctamer.

It is found in the plastid. The protein localises to the chloroplast. It catalyses the reaction L-glutamate + NH4(+) + ATP = L-glutamine + ADP + phosphate + H(+). Functionally, the light-modulated chloroplast enzyme, encoded by a nuclear gene and expressed primarily in leaves, is responsible for the reassimilation of the ammonia generated by photorespiration. In Daucus carota (Wild carrot), this protein is Glutamine synthetase, chloroplastic (GLN2).